The following is a 134-amino-acid chain: uncharacterized protein (134 aa).

3 helical membrane passes run 9 to 29, 49 to 69, and 107 to 127; these read PYFL…HGTA, MLLV…LGLF, and ALLY…ACAL.

Belongs to the DoxX family.

It is found in the cell membrane. This is an uncharacterized protein from Haemophilus influenzae (strain ATCC 51907 / DSM 11121 / KW20 / Rd).